The primary structure comprises 76 residues: Translational regulator CsrA (76 aa).

It belongs to the CsrA/RsmA family. As to quaternary structure, homodimer; the beta-strands of each monomer intercalate to form a hydrophobic core, while the alpha-helices form wings that extend away from the core.

It is found in the cytoplasm. Its function is as follows. A translational regulator that binds mRNA to regulate translation initiation and/or mRNA stability. Usually binds in the 5'-UTR at or near the Shine-Dalgarno sequence preventing ribosome-binding, thus repressing translation. Its main target seems to be the major flagellin gene, while its function is anatagonized by FliW. The protein is Translational regulator CsrA of Helicobacter pylori (strain P12).